The sequence spans 201 residues: Probable nicotinate-nucleotide adenylyltransferase (201 aa).

Belongs to the NadD family.

It catalyses the reaction nicotinate beta-D-ribonucleotide + ATP + H(+) = deamido-NAD(+) + diphosphate. It participates in cofactor biosynthesis; NAD(+) biosynthesis; deamido-NAD(+) from nicotinate D-ribonucleotide: step 1/1. Its function is as follows. Catalyzes the reversible adenylation of nicotinate mononucleotide (NaMN) to nicotinic acid adenine dinucleotide (NaAD). The sequence is that of Probable nicotinate-nucleotide adenylyltransferase from Bacteroides fragilis (strain YCH46).